The chain runs to 133 residues: ATP synthase epsilon chain (133 aa).

This sequence belongs to the ATPase epsilon chain family. As to quaternary structure, F-type ATPases have 2 components, CF(1) - the catalytic core - and CF(0) - the membrane proton channel. CF(1) has five subunits: alpha(3), beta(3), gamma(1), delta(1), epsilon(1). CF(0) has three main subunits: a, b and c.

The protein resides in the cell membrane. Functionally, produces ATP from ADP in the presence of a proton gradient across the membrane. This Staphylococcus haemolyticus (strain JCSC1435) protein is ATP synthase epsilon chain.